Here is a 186-residue protein sequence, read N- to C-terminus: Single-stranded DNA-binding protein 1 (186 aa).

One can recognise an SSB domain in the interval 1 to 108; sequence MDATVTVVGN…LEIDEIGPTL (108 aa). Residues 120–186 form a disordered region; it reads QAGHGVSPDP…EDFDSDEVPF (67 aa). The span at 132 to 141 shows a compositional bias: polar residues; the sequence is DSQTGQGIDS. Residues 175–186 are compositionally biased toward acidic residues; sequence SYEDFDSDEVPF.

Homotetramer.

The chain is Single-stranded DNA-binding protein 1 (ssb1) from Tropheryma whipplei (strain TW08/27) (Whipple's bacillus).